A 338-amino-acid polypeptide reads, in one-letter code: GTPase Obg (338 aa).

In terms of domain architecture, Obg spans 1–159 (MSFIDEVKIH…RWLRLELKLM (159 aa)). Residues 160–331 (ADVGLLGMPS…LLDEIARNLW (172 aa)) form the OBG-type G domain. GTP is bound by residues 166–173 (GMPSVGKS), 191–195 (FTTLK), 213–216 (DIPG), 283–286 (NKID), and 312–314 (SAA). Mg(2+)-binding residues include Ser173 and Thr193.

Belongs to the TRAFAC class OBG-HflX-like GTPase superfamily. OBG GTPase family. As to quaternary structure, monomer. The cofactor is Mg(2+).

It is found in the cytoplasm. In terms of biological role, an essential GTPase which binds GTP, GDP and possibly (p)ppGpp with moderate affinity, with high nucleotide exchange rates and a fairly low GTP hydrolysis rate. Plays a role in control of the cell cycle, stress response, ribosome biogenesis and in those bacteria that undergo differentiation, in morphogenesis control. The polypeptide is GTPase Obg (Geotalea uraniireducens (strain Rf4) (Geobacter uraniireducens)).